Reading from the N-terminus, the 448-residue chain is Phosphoglucosamine mutase (448 aa).

S100 serves as the catalytic Phosphoserine intermediate. Residues S100, D240, D242, and D244 each contribute to the Mg(2+) site. S100 is subject to Phosphoserine.

Belongs to the phosphohexose mutase family. Mg(2+) is required as a cofactor. In terms of processing, activated by phosphorylation.

It catalyses the reaction alpha-D-glucosamine 1-phosphate = D-glucosamine 6-phosphate. Its function is as follows. Catalyzes the conversion of glucosamine-6-phosphate to glucosamine-1-phosphate. This is Phosphoglucosamine mutase from Clostridium beijerinckii (strain ATCC 51743 / NCIMB 8052) (Clostridium acetobutylicum).